The chain runs to 318 residues: Protein W (318 aa).

Disordered stretches follow at residues 1–24 (MDQDALISKEDSEVEREASGGRES) and 38–318 (SEPT…KKGA). Residues 7-20 (ISKEDSEVEREASG) show a composition bias toward basic and acidic residues. The segment covering 50–61 (LHNTINTLQRPG) has biased composition (polar residues). Composition is skewed to basic and acidic residues over residues 99 to 110 (AEAHARNVDKQN) and 150 to 168 (GAEDENREMAANPDKRGED). A phosphoserine; by host mark is found at S249, S257, and S260.

In Sendai virus (strain Hamamatsu) (SeV), this protein is Protein W (P/V/C).